Here is a 358-residue protein sequence, read N- to C-terminus: Chorismate synthase (358 aa).

Position 47 (Arg47) interacts with NADP(+). FMN contacts are provided by residues 124–126 (RSS), 240–241 (NA), Gly284, 299–303 (KPVAT), and Arg325.

Belongs to the chorismate synthase family. As to quaternary structure, homotetramer. FMNH2 is required as a cofactor.

It carries out the reaction 5-O-(1-carboxyvinyl)-3-phosphoshikimate = chorismate + phosphate. Its pathway is metabolic intermediate biosynthesis; chorismate biosynthesis; chorismate from D-erythrose 4-phosphate and phosphoenolpyruvate: step 7/7. Functionally, catalyzes the anti-1,4-elimination of the C-3 phosphate and the C-6 proR hydrogen from 5-enolpyruvylshikimate-3-phosphate (EPSP) to yield chorismate, which is the branch point compound that serves as the starting substrate for the three terminal pathways of aromatic amino acid biosynthesis. This reaction introduces a second double bond into the aromatic ring system. The chain is Chorismate synthase from Phocaeicola vulgatus (strain ATCC 8482 / DSM 1447 / JCM 5826 / CCUG 4940 / NBRC 14291 / NCTC 11154) (Bacteroides vulgatus).